Here is a 521-residue protein sequence, read N- to C-terminus: Bifunctional purine biosynthesis protein PurH (521 aa).

The region spanning 1–145 (MIKQALISVS…KNHRDVTVVV (145 aa)) is the MGS-like domain.

Belongs to the PurH family.

The catalysed reaction is (6R)-10-formyltetrahydrofolate + 5-amino-1-(5-phospho-beta-D-ribosyl)imidazole-4-carboxamide = 5-formamido-1-(5-phospho-D-ribosyl)imidazole-4-carboxamide + (6S)-5,6,7,8-tetrahydrofolate. The enzyme catalyses IMP + H2O = 5-formamido-1-(5-phospho-D-ribosyl)imidazole-4-carboxamide. The protein operates within purine metabolism; IMP biosynthesis via de novo pathway; 5-formamido-1-(5-phospho-D-ribosyl)imidazole-4-carboxamide from 5-amino-1-(5-phospho-D-ribosyl)imidazole-4-carboxamide (10-formyl THF route): step 1/1. Its pathway is purine metabolism; IMP biosynthesis via de novo pathway; IMP from 5-formamido-1-(5-phospho-D-ribosyl)imidazole-4-carboxamide: step 1/1. The polypeptide is Bifunctional purine biosynthesis protein PurH (Burkholderia orbicola (strain AU 1054)).